The sequence spans 137 residues: Golgin subfamily A member 7 (137 aa).

S-palmitoyl cysteine attachment occurs at residues Cys-69 and Cys-72.

Belongs to the ERF4 family. Interacts with GOLGA3. Interacts with ZDHHC9. Post-translationally, palmitoylated on Cys-69 and Cys-72; which is required for Golgi localization and interaction with GOLGA3.

It localises to the golgi apparatus membrane. Its function is as follows. May be involved in protein transport from Golgi to cell surface. The ZDHHC9-GOLGA7 complex is a palmitoyltransferase specific for HRAS and NRAS. In Bos taurus (Bovine), this protein is Golgin subfamily A member 7 (GOLGA7).